Here is an 876-residue protein sequence, read N- to C-terminus: DNA mismatch repair protein MutS (876 aa).

628 to 635 (GPNMAGKS) contacts ATP.

It belongs to the DNA mismatch repair MutS family.

Functionally, this protein is involved in the repair of mismatches in DNA. It is possible that it carries out the mismatch recognition step. This protein has a weak ATPase activity. The sequence is that of DNA mismatch repair protein MutS from Chlorobaculum parvum (strain DSM 263 / NCIMB 8327) (Chlorobium vibrioforme subsp. thiosulfatophilum).